Reading from the N-terminus, the 217-residue chain is Pyridoxine/pyridoxamine 5'-phosphate oxidase (217 aa).

Substrate is bound by residues 13-16 (RRDY) and K71. FMN is bound by residues 66 to 71 (RIVLLK), 81 to 82 (YT), K88, and Q110. The substrate site is built by Y128, R132, and S136. Residues 145 to 146 (QS) and W190 contribute to the FMN site. A substrate-binding site is contributed by 196-198 (RLH). R200 is an FMN binding site.

It belongs to the pyridoxamine 5'-phosphate oxidase family. Homodimer. FMN is required as a cofactor.

The enzyme catalyses pyridoxamine 5'-phosphate + O2 + H2O = pyridoxal 5'-phosphate + H2O2 + NH4(+). It catalyses the reaction pyridoxine 5'-phosphate + O2 = pyridoxal 5'-phosphate + H2O2. It participates in cofactor metabolism; pyridoxal 5'-phosphate salvage; pyridoxal 5'-phosphate from pyridoxamine 5'-phosphate: step 1/1. The protein operates within cofactor metabolism; pyridoxal 5'-phosphate salvage; pyridoxal 5'-phosphate from pyridoxine 5'-phosphate: step 1/1. Its function is as follows. Catalyzes the oxidation of either pyridoxine 5'-phosphate (PNP) or pyridoxamine 5'-phosphate (PMP) into pyridoxal 5'-phosphate (PLP). The protein is Pyridoxine/pyridoxamine 5'-phosphate oxidase of Edwardsiella ictaluri (strain 93-146).